Here is a 311-residue protein sequence, read N- to C-terminus: Glutaminase (311 aa).

Substrate is bound by residues serine 66, asparagine 116, glutamate 162, asparagine 169, tyrosine 193, tyrosine 245, and valine 263.

Belongs to the glutaminase family. In terms of assembly, homotetramer.

The enzyme catalyses L-glutamine + H2O = L-glutamate + NH4(+). The chain is Glutaminase from Rhodopseudomonas palustris (strain TIE-1).